We begin with the raw amino-acid sequence, 61 residues long: Large ribosomal subunit protein bL32 (61 aa).

Belongs to the bacterial ribosomal protein bL32 family.

The protein is Large ribosomal subunit protein bL32 of Cytophaga hutchinsonii (strain ATCC 33406 / DSM 1761 / CIP 103989 / NBRC 15051 / NCIMB 9469 / D465).